The primary structure comprises 704 residues: Elongation factor G (704 aa).

Positions 8–291 (DKVRNIGIMA…TVVECLPSPV (284 aa)) constitute a tr-type G domain. GTP is bound by residues 17–24 (AHIDAGKT), 90–94 (DTPGH), and 144–147 (NKMD).

Belongs to the TRAFAC class translation factor GTPase superfamily. Classic translation factor GTPase family. EF-G/EF-2 subfamily.

It is found in the cytoplasm. Its function is as follows. Catalyzes the GTP-dependent ribosomal translocation step during translation elongation. During this step, the ribosome changes from the pre-translocational (PRE) to the post-translocational (POST) state as the newly formed A-site-bound peptidyl-tRNA and P-site-bound deacylated tRNA move to the P and E sites, respectively. Catalyzes the coordinated movement of the two tRNA molecules, the mRNA and conformational changes in the ribosome. This is Elongation factor G from Prosthecochloris aestuarii (strain DSM 271 / SK 413).